A 298-amino-acid polypeptide reads, in one-letter code: Tyrosine recombinase XerD (298 aa).

In terms of domain architecture, Core-binding (CB) spans 2 to 87 (KQDLARIEQF…AVRRLFQYLY (86 aa)). The Tyr recombinase domain maps to 108–292 (RLPKDLSEAQ…ATERLRQLHQ (185 aa)). Catalysis depends on residues Arg148, Lys172, His244, Arg247, and His270. Tyr279 acts as the O-(3'-phospho-DNA)-tyrosine intermediate in catalysis.

This sequence belongs to the 'phage' integrase family. XerD subfamily. As to quaternary structure, forms a cyclic heterotetrameric complex composed of two molecules of XerC and two molecules of XerD, in which XerC interacts with XerD via its C-terminal region, XerD interacts with XerC via its C-terminal region and so on.

It is found in the cytoplasm. Its activity is regulated as follows. FtsK may regulate the catalytic switch between XerC and XerD in the heterotetrameric complex during the two steps of the recombination process. In terms of biological role, site-specific tyrosine recombinase, which acts by catalyzing the cutting and rejoining of the recombining DNA molecules. Binds cooperatively to specific DNA consensus sequences that are separated from XerC binding sites by a short central region, forming the heterotetrameric XerC-XerD complex that recombines DNA substrates. The complex is essential to convert dimers of the bacterial chromosome into monomers to permit their segregation at cell division. It also contributes to the segregational stability of plasmids. In the complex XerD specifically exchanges the bottom DNA strands. This is Tyrosine recombinase XerD from Escherichia coli O157:H7.